Reading from the N-terminus, the 515-residue chain is Histidine ammonia-lyase (515 aa).

The 5-imidazolinone (Ala-Gly) cross-link spans 142 to 144; the sequence is ASG. Ser143 carries the post-translational modification 2,3-didehydroalanine (Ser).

Belongs to the PAL/histidase family. In terms of processing, contains an active site 4-methylidene-imidazol-5-one (MIO), which is formed autocatalytically by cyclization and dehydration of residues Ala-Ser-Gly.

The protein localises to the cytoplasm. It catalyses the reaction L-histidine = trans-urocanate + NH4(+). It functions in the pathway amino-acid degradation; L-histidine degradation into L-glutamate; N-formimidoyl-L-glutamate from L-histidine: step 1/3. This is Histidine ammonia-lyase from Bradyrhizobium sp. (strain ORS 278).